Here is a 220-residue protein sequence, read N- to C-terminus: MEEEIILLDYWASMYGMRTRIALEEKKVKYEYREEDLSNKSPLLLQMNPIHKKIPVLIHEGKPICESIIQVQYIDELWPDTNPILPSDPYQRAQARFWADYIDKKTYVPCKALWSESGEKQEAAKIEFIEVLKTLDSELGDKYYFGGNEFGLVDIAFIGFYSWFRTYEEVANLSIVLEFPKLMAWAQRCLKRESVAKALPDSDKVLKSVSDHRKIILGID.

One can recognise a GST N-terminal domain in the interval 3-82 (EEIILLDYWA…YIDELWPDTN (80 aa)). Glutathione is bound by residues 13 to 14 (SM), 39 to 40 (NK), 53 to 54 (KI), and 66 to 67 (ES). Residues 88–208 (DPYQRAQARF…LPDSDKVLKS (121 aa)) form the GST C-terminal domain.

The protein belongs to the GST superfamily. Tau family.

It localises to the cytoplasm. The protein resides in the cytosol. The catalysed reaction is RX + glutathione = an S-substituted glutathione + a halide anion + H(+). Functionally, may be involved in the conjugation of reduced glutathione to a wide number of exogenous and endogenous hydrophobic electrophiles and have a detoxification role against certain herbicides. This chain is Glutathione S-transferase U23 (GSTU23), found in Arabidopsis thaliana (Mouse-ear cress).